A 146-amino-acid polypeptide reads, in one-letter code: MMDIHQILKLLPHRYPFLLVDRVVELERGERIQAIKNVTINEPFFTGHFPNRPVMPGVLMLEALAQAAGLLSFDMMGEAPGDDKVFYFVGIDGARFKRPVEPGDQLILDVKLDRIKGGIYKFGGVARVGDSVACEAEIMCTMRTVA.

His-48 is a catalytic residue.

Belongs to the thioester dehydratase family. FabZ subfamily.

The protein localises to the cytoplasm. The enzyme catalyses a (3R)-hydroxyacyl-[ACP] = a (2E)-enoyl-[ACP] + H2O. In terms of biological role, involved in unsaturated fatty acids biosynthesis. Catalyzes the dehydration of short chain beta-hydroxyacyl-ACPs and long chain saturated and unsaturated beta-hydroxyacyl-ACPs. The polypeptide is 3-hydroxyacyl-[acyl-carrier-protein] dehydratase FabZ (Paracidovorax citrulli (strain AAC00-1) (Acidovorax citrulli)).